We begin with the raw amino-acid sequence, 88 residues long: Small ribosomal subunit protein bS20 (88 aa).

Positions 1-23 (MPNTKSAEKALRVADANRQENRR) are enriched in basic and acidic residues. A disordered region spans residues 1-29 (MPNTKSAEKALRVADANRQENRRAKSQVK).

This sequence belongs to the bacterial ribosomal protein bS20 family.

Functionally, binds directly to 16S ribosomal RNA. The polypeptide is Small ribosomal subunit protein bS20 (Dehalococcoides mccartyi (strain ATCC BAA-2100 / JCM 16839 / KCTC 5957 / BAV1)).